Consider the following 77-residue polypeptide: NADH-ubiquinone oxidoreductase chain 4L (77 aa).

A run of 2 helical transmembrane segments spans residues 15 to 37 (WQRL…LKFS) and 44 to 64 (MFFY…VVMV).

This sequence belongs to the complex I subunit 4L family.

It is found in the mitochondrion membrane. The enzyme catalyses a ubiquinone + NADH + 5 H(+)(in) = a ubiquinol + NAD(+) + 4 H(+)(out). Functionally, core subunit of the mitochondrial membrane respiratory chain NADH dehydrogenase (Complex I) that is believed to belong to the minimal assembly required for catalysis. Complex I functions in the transfer of electrons from NADH to the respiratory chain. The immediate electron acceptor for the enzyme is believed to be ubiquinone. The chain is NADH-ubiquinone oxidoreductase chain 4L from Caenorhabditis elegans.